A 319-amino-acid chain; its full sequence is ATP-dependent 6-phosphofructokinase (319 aa).

ATP is bound at residue Gly-11. Residue 21-25 (RAVVR) coordinates ADP. Residues 72–73 (RS) and 102–105 (GDGS) contribute to the ATP site. Asp-103 is a Mg(2+) binding site. Residue 125 to 127 (TID) participates in substrate binding. Asp-127 serves as the catalytic Proton acceptor. Arg-154 provides a ligand contact to ADP. Substrate-binding positions include Arg-162 and 169 to 171 (MGR). Residues 185–187 (GAE), Arg-211, and 213–215 (KKH) contribute to the ADP site. Residues Glu-222, Arg-243, and 249-252 (HIQR) each bind substrate.

It belongs to the phosphofructokinase type A (PFKA) family. ATP-dependent PFK group I subfamily. Prokaryotic clade 'B1' sub-subfamily. In terms of assembly, homotetramer. Requires Mg(2+) as cofactor.

It localises to the cytoplasm. The enzyme catalyses beta-D-fructose 6-phosphate + ATP = beta-D-fructose 1,6-bisphosphate + ADP + H(+). It participates in carbohydrate degradation; glycolysis; D-glyceraldehyde 3-phosphate and glycerone phosphate from D-glucose: step 3/4. Allosterically activated by ADP and other diphosphonucleosides, and allosterically inhibited by phosphoenolpyruvate. Catalyzes the phosphorylation of D-fructose 6-phosphate to fructose 1,6-bisphosphate by ATP, the first committing step of glycolysis. This chain is ATP-dependent 6-phosphofructokinase, found in Oceanobacillus iheyensis (strain DSM 14371 / CIP 107618 / JCM 11309 / KCTC 3954 / HTE831).